Reading from the N-terminus, the 911-residue chain is Protein translocase subunit SecA (911 aa).

Residues glutamine 87, 105-109 (GEGKT), and aspartate 512 contribute to the ATP site. The segment at 861 to 893 (APGLESEQLSEEGAEVAVASAPVRNDQKLGRNE) is disordered. Zn(2+) contacts are provided by cysteine 895, cysteine 897, cysteine 906, and histidine 907.

It belongs to the SecA family. Monomer and homodimer. Part of the essential Sec protein translocation apparatus which comprises SecA, SecYEG and auxiliary proteins SecDF-YajC and YidC. Zn(2+) is required as a cofactor.

The protein resides in the cell inner membrane. The protein localises to the cytoplasm. It carries out the reaction ATP + H2O + cellular proteinSide 1 = ADP + phosphate + cellular proteinSide 2.. Functionally, part of the Sec protein translocase complex. Interacts with the SecYEG preprotein conducting channel. Has a central role in coupling the hydrolysis of ATP to the transfer of proteins into and across the cell membrane, serving both as a receptor for the preprotein-SecB complex and as an ATP-driven molecular motor driving the stepwise translocation of polypeptide chains across the membrane. The sequence is that of Protein translocase subunit SecA from Pseudomonas putida (strain ATCC 700007 / DSM 6899 / JCM 31910 / BCRC 17059 / LMG 24140 / F1).